A 266-amino-acid chain; its full sequence is ES1 protein homolog, mitochondrial (266 aa).

Residues 1 to 39 constitute a mitochondrion transit peptide; the sequence is MAAVRVLVSPRLASALLPLSGRHRTTSQRAAIHSSAPRP. Lysine 149, lysine 155, and lysine 162 each carry N6-acetyllysine. Lysine 201 bears the N6-acetyllysine; alternate mark. Residue lysine 201 is modified to N6-succinyllysine; alternate. Position 217 is an N6-acetyllysine (lysine 217). 2 positions are modified to N6-acetyllysine; alternate: lysine 221 and lysine 231. N6-succinyllysine; alternate occurs at positions 221 and 231.

This sequence belongs to the ES1 family.

It is found in the mitochondrion. The protein is ES1 protein homolog, mitochondrial of Rattus norvegicus (Rat).